The sequence spans 223 residues: Glutathione-specific gamma-glutamylcyclotransferase 1 (223 aa).

Residues 1–26 (MKQESASQSTPPPSLSPAPSSAQPSW) form a disordered region. Position 36–41 (36–41 (IFGYGS)) interacts with substrate. The Proton acceptor role is filled by Glu-116.

Belongs to the gamma-glutamylcyclotransferase family. ChaC subfamily. Interacts with NOTCH1 (via extracellular region). In terms of tissue distribution, widely expressed, with high expression in forebrain and anterior spinal cord. Expressed at intermediate level in the dorsal aorta and heart. Present throughout adult brain (at protein level).

Its subcellular location is the cytoplasm. The protein resides in the cytosol. It is found in the golgi apparatus. The protein localises to the trans-Golgi network. It catalyses the reaction glutathione = L-cysteinylglycine + 5-oxo-L-proline. Catalyzes the cleavage of glutathione into 5-oxo-L-proline and a Cys-Gly dipeptide. Acts specifically on glutathione, but not on other gamma-glutamyl peptides. Glutathione depletion is an important factor for apoptosis initiation and execution. Acts as a pro-apoptotic component of the unfolded protein response pathway by mediating the pro-apoptotic effects of the ATF4-ATF3-DDIT3/CHOP cascade. Negative regulator of Notch signaling pathway involved in embryonic neurogenesis: acts by inhibiting Notch cleavage by furin, maintaining Notch in an immature inactive form, thereby promoting neurogenesis in embryos. In Mus musculus (Mouse), this protein is Glutathione-specific gamma-glutamylcyclotransferase 1.